A 365-amino-acid chain; its full sequence is MVVPTPFFVLRGHLSSVTSLSFVSDGILYSGDANGWMICWDLSVMRPTHIWRAHTKSILGVYGCSSEVVWTHGRDMQVARWHLNPPTGGSHIPLSLLHAIQQEKKNDQQSSSSLTIVSSVHKGYFFQTNNLTFCSFAISPAAGLLVVPNTVNAEQLDVYALNDTSDSDRRDNCGKRLQHALEPKPQIEKTGAVMSVALHVKYNKVVLVAGYESGHVVQYIADVDAAQKVNVYFQQVWQVMYAEKVHKEPVLSVVFGNDNGYLYSSSADDYIVRHTICLSKETHTNPESMKTGHPGQQCLRVRSDDKILVSAGWDGRGRVYGAKSLAKLAVLKYHSETCNCAAIQPGSNLIALGSKDSRISLWQIY.

WD repeat units follow at residues 12–50, 53–91, 188–230, 245–284, 292–330, and 333–365; these read GHLS…PTHI, AHTK…GGSH, EKTG…QKVN, VHKE…ETHT, GHPG…KLAV, and YHSE…WQIY.

This sequence belongs to the WD repeat ASA1 family. Component of the ASTRA chromatin remodeling machinery complex.

The protein resides in the nucleus. Functionally, component of the ASTRA complex involved in chromatin remodeling. The protein is ASTRA-associated protein 1 (asa1) of Schizosaccharomyces japonicus (strain yFS275 / FY16936) (Fission yeast).